A 723-amino-acid polypeptide reads, in one-letter code: Dipeptidyl aminopeptidase BI (723 aa).

The N-terminal stretch at 1–23 (MKPTSLLLAATVLMSTPITSALA) is a signal peptide. Active-site charge relay system residues include serine 574, aspartate 659, and histidine 694.

Belongs to the peptidase S9A family. As to quaternary structure, monomer.

Nearly completely inhibited by 0.5 mM ZnCl(2), 0.1 mM N-tosyl-L-lysyl chloromethyl ketone (TLCK) and 0.1 mM leupeptin. Strongly inhibited by 0.5 mM CoCl(2) and 0.1 mM chymostatin. Activity is hardly affected by general serine protease inhibitors phenylmethanesulfonyl fluoride (PMSF), diisopropyl fluorophosphate (DFP) and N-tosyl-L-phenyl-alanyl chloromethyl ketone (TPCK) or by aspartyl protease inhibitor pepstatin A or by CaCl(2) and EDTA. Cysteine protease inhibitors, such as N-ethylmaleimide (NEM), iodoacetic acid and L-trans-epoxysuccinyl-leucylamido(4-guanido)butane (E-64) have no effect on activity. In terms of biological role, sequentially removes dipeptide units (NH3-P2-P1-) from the amino termini of peptides and proteins. Is able to catalyze the removal of Asp-Arg from the amino termini of angiotensins I and II. Has slight endopeptidase activity on N-terminally blocked peptide derivatives which contain arginine residues at the P1 position. Does not hydrolyze Ala-Ala-Ala and Ala-Ala-Ala-Ala substrates or insulin beta chain. In Pseudoxanthomonas mexicana, this protein is Dipeptidyl aminopeptidase BI.